We begin with the raw amino-acid sequence, 228 residues long: Fibrillarin-like rRNA/tRNA 2'-O-methyltransferase (228 aa).

S-adenosyl-L-methionine-binding positions include 85 to 86 (TT), 103 to 104 (EF), 128 to 129 (DA), and 148 to 151 (DVAQ).

The protein belongs to the methyltransferase superfamily. Fibrillarin family. As to quaternary structure, interacts with nop5. Component of box C/D small ribonucleoprotein (sRNP) particles that contain rpl7ae, FlpA and nop5, plus a guide RNA.

Its function is as follows. Involved in pre-rRNA and tRNA processing. Utilizes the methyl donor S-adenosyl-L-methionine to catalyze the site-specific 2'-hydroxyl methylation of ribose moieties in rRNA and tRNA. Site specificity is provided by a guide RNA that base pairs with the substrate. Methylation occurs at a characteristic distance from the sequence involved in base pairing with the guide RNA. This Methanococcus voltae protein is Fibrillarin-like rRNA/tRNA 2'-O-methyltransferase.